The primary structure comprises 479 residues: Aryl-phospho-beta-D-glucosidase BglA (479 aa).

The Proton donor role is filled by Glu176. Glu377 (nucleophile) is an active-site residue.

The protein belongs to the glycosyl hydrolase 1 family.

It catalyses the reaction 6-phospho-beta-D-glucosyl-(1-&gt;4)-D-glucose + H2O = D-glucose 6-phosphate + D-glucose. Functionally, catalyzes the hydrolysis of aryl-phospho-beta-D-glucosides such as 4-methylumbelliferyl-phospho-beta-D-glucopyranoside (MUG-P), phosphoarbutin and phosphosalicin. Plays a major role in the utilization of arbutin or salicin as the sole carbon source. BglA and BglH are the major proteins contributing to hydrolysis of MUG-P by extracts of late-exponential-phase or stationary-phase B.subtilis cells. The polypeptide is Aryl-phospho-beta-D-glucosidase BglA (bglA) (Bacillus subtilis (strain 168)).